Here is a 660-residue protein sequence, read N- to C-terminus: Bifunctional polymyxin resistance protein ArnA (660 aa).

The segment at 1–304 (MKTVVFAYHD…TLGLVQGSRL (304 aa)) is formyltransferase ArnAFT. 86–88 (HLI) provides a ligand contact to (6R)-10-formyltetrahydrofolate. Histidine 104 functions as the Proton donor; for formyltransferase activity in the catalytic mechanism. Residues arginine 114 and 136–140 (VKRAD) contribute to the (6R)-10-formyltetrahydrofolate site. The interval 314 to 660 (RRTRVLILGV…RTVDLTDKPS (347 aa)) is dehydrogenase ArnADH. NAD(+)-binding positions include aspartate 347 and 368–369 (DI). UDP-alpha-D-glucuronate-binding positions include alanine 393, tyrosine 398, and 432-433 (TS). Glutamate 434 functions as the Proton acceptor; for decarboxylase activity in the catalytic mechanism. UDP-alpha-D-glucuronate-binding positions include arginine 460, asparagine 492, 526–535 (KLIDGGKQKR), and tyrosine 613. Residue arginine 619 is the Proton donor; for decarboxylase activity of the active site.

The protein in the N-terminal section; belongs to the Fmt family. UDP-L-Ara4N formyltransferase subfamily. In the C-terminal section; belongs to the NAD(P)-dependent epimerase/dehydratase family. UDP-glucuronic acid decarboxylase subfamily. As to quaternary structure, homohexamer, formed by a dimer of trimers.

It carries out the reaction UDP-alpha-D-glucuronate + NAD(+) = UDP-beta-L-threo-pentopyranos-4-ulose + CO2 + NADH. It catalyses the reaction UDP-4-amino-4-deoxy-beta-L-arabinose + (6R)-10-formyltetrahydrofolate = UDP-4-deoxy-4-formamido-beta-L-arabinose + (6S)-5,6,7,8-tetrahydrofolate + H(+). Its pathway is nucleotide-sugar biosynthesis; UDP-4-deoxy-4-formamido-beta-L-arabinose biosynthesis; UDP-4-deoxy-4-formamido-beta-L-arabinose from UDP-alpha-D-glucuronate: step 1/3. The protein operates within nucleotide-sugar biosynthesis; UDP-4-deoxy-4-formamido-beta-L-arabinose biosynthesis; UDP-4-deoxy-4-formamido-beta-L-arabinose from UDP-alpha-D-glucuronate: step 3/3. It participates in bacterial outer membrane biogenesis; lipopolysaccharide biosynthesis. Functionally, bifunctional enzyme that catalyzes the oxidative decarboxylation of UDP-glucuronic acid (UDP-GlcUA) to UDP-4-keto-arabinose (UDP-Ara4O) and the addition of a formyl group to UDP-4-amino-4-deoxy-L-arabinose (UDP-L-Ara4N) to form UDP-L-4-formamido-arabinose (UDP-L-Ara4FN). The modified arabinose is attached to lipid A and is required for resistance to polymyxin and cationic antimicrobial peptides. This chain is Bifunctional polymyxin resistance protein ArnA, found in Escherichia coli O1:K1 / APEC.